A 203-amino-acid polypeptide reads, in one-letter code: DNA-directed RNA polymerase subunit gamma (203 aa).

Residues Cys-34, Cys-36, Cys-49, and Cys-52 each coordinate Zn(2+).

Belongs to the RNA polymerase beta' chain family. RpoC1 subfamily. In cyanobacteria the RNAP catalytic core is composed of 2 alpha, 1 beta, 1 beta', 1 gamma and 1 omega subunit. When a sigma factor is associated with the core the holoenzyme is formed, which can initiate transcription. Zn(2+) serves as cofactor.

The enzyme catalyses RNA(n) + a ribonucleoside 5'-triphosphate = RNA(n+1) + diphosphate. Functionally, DNA-dependent RNA polymerase catalyzes the transcription of DNA into RNA using the four ribonucleoside triphosphates as substrates. The polypeptide is DNA-directed RNA polymerase subunit gamma (rpoC1) (Prochlorothrix hollandica).